We begin with the raw amino-acid sequence, 480 residues long: RNA-binding protein 42 (480 aa).

The interval 1–30 (MAGAGPAPGLPGAGGPVVPGPGAGIPGKSG) is disordered. The residue at position 2 (Ala2) is an N-acetylalanine. A compositionally biased stretch (gly residues) spans 11 to 27 (PGAGGPVVPGPGAGIPG). The residue at position 135 (Ser135) is a Phosphoserine. Asymmetric dimethylarginine is present on residues Arg153, Arg158, Arg168, and Arg181. The tract at residues 236–480 (ELGLGLGLGL…QKEKKKLGLR (245 aa)) is necessary for interaction with HNRNPK. Positions 319 to 356 (SLRPRPRPPRPEPPPGLMALEVPEPLGEDKKKGKPEKL) are disordered. Positions 345 to 356 (GEDKKKGKPEKL) are enriched in basic and acidic residues. In terms of domain architecture, RRM spans 381–459 (FRIFCGDLGN…RPIKLRKSMW (79 aa)).

The protein belongs to the RRM RBM42 family. Interacts with HNRNPK.

Its subcellular location is the nucleus. It localises to the cytoplasm. Functionally, binds (via the RRM domain) to the 3'-untranslated region (UTR) of CDKN1A mRNA. The protein is RNA-binding protein 42 (RBM42) of Homo sapiens (Human).